A 460-amino-acid chain; its full sequence is Ufm1-specific protease 2 (460 aa).

Catalysis depends on residues Cys293, Asp417, and His419.

The protein belongs to the peptidase C78 family.

Its subcellular location is the endoplasmic reticulum. The protein localises to the cytoplasm. It localises to the nucleus. Functionally, thiol-dependent isopeptidase that specifically cleaves UFM1, a ubiquitin-like modifier protein, from conjugated proteins. While it is also able to mediate the processing of UFM1 precursors, a prerequisite for conjugation reactions, UFSP2 mainly acts as a protein deUFMylase that mediates deconjugation of UFM1 from target proteins. This chain is Ufm1-specific protease 2, found in Gallus gallus (Chicken).